The following is a 250-amino-acid chain: Probable transcriptional regulatory protein Ppha_0657 (250 aa).

It belongs to the TACO1 family.

It localises to the cytoplasm. This chain is Probable transcriptional regulatory protein Ppha_0657, found in Pelodictyon phaeoclathratiforme (strain DSM 5477 / BU-1).